Reading from the N-terminus, the 397-residue chain is N-acetyllactosaminide beta-1,3-N-acetylglucosaminyltransferase 2 (397 aa).

The Cytoplasmic segment spans residues 1–7 (MSVGRRR). The helical; Signal-anchor for type II membrane protein transmembrane segment at 8–28 (VKLLGILMMANVFIYLIVEVS) threads the bilayer. At 29–325 (KNSSQDKNGK…ALRLYSATSR (297 aa)) the chain is on the lumenal side. N-linked (GlcNAc...) asparagine glycosylation is found at N30, N79, N89, N127, N173, and N219.

The protein belongs to the glycosyltransferase 31 family. In terms of assembly, interacts with B3GNT8; this interaction greatly increases B3GNT2 catalytic activity, independently of B3GNT8 enzymatic activity. The cofactor is Mn(2+). As to expression, expressed in heart, brain, lung, kidney and testis and, to a lesser extent, in liver and skeletal muscle. No expression in spleen.

Its subcellular location is the golgi apparatus membrane. The enzyme catalyses a beta-D-galactosyl-(1-&gt;4)-N-acetyl-beta-D-glucosaminyl derivative + UDP-N-acetyl-alpha-D-glucosamine = an N-acetyl-beta-D-glucosaminyl-(1-&gt;3)-beta-D-galactosyl-(1-&gt;4)-N-acetyl-beta-D-glucosaminyl derivative + UDP + H(+). It functions in the pathway protein modification; protein glycosylation. Beta-1,3-N-acetylglucosaminyltransferase involved in the synthesis of poly-N-acetyllactosamine. Catalyzes the initiation and elongation of poly-N-acetyllactosamine chains. Probably constitutes the main polylactosamine synthase. The chain is N-acetyllactosaminide beta-1,3-N-acetylglucosaminyltransferase 2 (B3GNT2) from Mus musculus (Mouse).